Consider the following 306-residue polypeptide: Protein YIPF1 (306 aa).

Residues M1–D119 lie on the Cytoplasmic side of the membrane. The segment at N14–D62 is disordered. Over residues A15–N29 the composition is skewed to polar residues. The segment covering E50 to D59 has biased composition (acidic residues). The helical transmembrane segment at L120–L140 threads the bilayer. Residues S141–S162 are Lumenal-facing. A helical membrane pass occupies residues I163–L183. Residues M184–E200 lie on the Cytoplasmic side of the membrane. The chain crosses the membrane as a helical span at residues I201 to I221. Over P222 to R227 the chain is Lumenal. Residues W228–P248 traverse the membrane as a helical segment. The Cytoplasmic portion of the chain corresponds to A249 to R256. Residues V257–L277 traverse the membrane as a helical segment. The Lumenal segment spans residues A278–S306. N-linked (GlcNAc...) asparagine glycosylation is present at N297.

Belongs to the YIP1 family. Interacts with YIPF6; this interaction may stabilize YIPF1. May also form a ternary complex with YIPF2 and YIPF6.

It localises to the golgi apparatus. It is found in the cis-Golgi network membrane. Its subcellular location is the trans-Golgi network membrane. The protein resides in the late endosome membrane. The sequence is that of Protein YIPF1 (YIPF1) from Homo sapiens (Human).